The chain runs to 217 residues: Large ribosomal subunit protein uL3 (217 aa).

This sequence belongs to the universal ribosomal protein uL3 family. In terms of assembly, part of the 50S ribosomal subunit. Forms a cluster with proteins L14 and L19.

Its function is as follows. One of the primary rRNA binding proteins, it binds directly near the 3'-end of the 23S rRNA, where it nucleates assembly of the 50S subunit. The polypeptide is Large ribosomal subunit protein uL3 (Mycobacterium marinum (strain ATCC BAA-535 / M)).